Reading from the N-terminus, the 348-residue chain is Methylthioribose-1-phosphate isomerase (348 aa).

Substrate contacts are provided by residues 48 to 50, arginine 90, and glutamine 195; that span reads RGA. The Proton donor role is filled by aspartate 236. 246–247 contributes to the substrate binding site; sequence NK.

It belongs to the eIF-2B alpha/beta/delta subunits family. MtnA subfamily.

The catalysed reaction is 5-(methylsulfanyl)-alpha-D-ribose 1-phosphate = 5-(methylsulfanyl)-D-ribulose 1-phosphate. It participates in amino-acid biosynthesis; L-methionine biosynthesis via salvage pathway; L-methionine from S-methyl-5-thio-alpha-D-ribose 1-phosphate: step 1/6. Catalyzes the interconversion of methylthioribose-1-phosphate (MTR-1-P) into methylthioribulose-1-phosphate (MTRu-1-P). In Exiguobacterium sibiricum (strain DSM 17290 / CCUG 55495 / CIP 109462 / JCM 13490 / 255-15), this protein is Methylthioribose-1-phosphate isomerase.